The sequence spans 192 residues: Phosphoheptose isomerase (192 aa).

The region spanning 35-192 (LIETLENQGK…CIERHFAHKN (158 aa)) is the SIS domain. 50–52 (NGG) is a binding site for substrate. Histidine 59 and glutamate 63 together coordinate Zn(2+). Substrate is bound by residues glutamate 63, 92–93 (ND), 118–120 (STS), serine 123, and glutamine 170. Residues glutamine 170 and histidine 178 each contribute to the Zn(2+) site.

It belongs to the SIS family. GmhA subfamily. Homotetramer. It depends on Zn(2+) as a cofactor.

It localises to the cytoplasm. The enzyme catalyses 2 D-sedoheptulose 7-phosphate = D-glycero-alpha-D-manno-heptose 7-phosphate + D-glycero-beta-D-manno-heptose 7-phosphate. It participates in carbohydrate biosynthesis; D-glycero-D-manno-heptose 7-phosphate biosynthesis; D-glycero-alpha-D-manno-heptose 7-phosphate and D-glycero-beta-D-manno-heptose 7-phosphate from sedoheptulose 7-phosphate: step 1/1. The protein operates within bacterial outer membrane biogenesis; LPS core biosynthesis. Its function is as follows. Catalyzes the isomerization of sedoheptulose 7-phosphate in D-glycero-D-manno-heptose 7-phosphate. The sequence is that of Phosphoheptose isomerase from Helicobacter pylori (strain ATCC 700392 / 26695) (Campylobacter pylori).